The sequence spans 267 residues: HTH-type transcriptional activator CsvR (267 aa).

DNA-binding regions (H-T-H motif) lie at residues 183–204 (AIIADVFNVSEITIRKRLESED) and 230–253 (ISQISNMIGISSASYFIRIFNKHF).

As to quaternary structure, homodimer.

In terms of biological role, transcriptional activator of fimbrial genes in enterotoxigenic E.coli. In Escherichia coli, this protein is HTH-type transcriptional activator CsvR.